Reading from the N-terminus, the 154-residue chain is Nuclear cap-binding protein subunit 2 (154 aa).

MRNA is bound by residues Y10, Y33, 102 to 106, 113 to 117, and 123 to 124; these read RVDWD, RQYGR, and QV. An RRM domain is found at 30 to 108; that stretch reads CTLYVGNLSF…RLIRVDWDAG (79 aa).

Belongs to the RRM NCBP2 family. As to quaternary structure, component of the nuclear cap-binding complex (CBC), a heterodimer composed of Cbp80 and Cbp20 that interacts with m7GpppG-capped RNA. Interacts with Ars2.

The protein localises to the nucleus. Component of the cap-binding complex (CBC), which binds co-transcriptionally to the 5' cap of pre-mRNAs and is involved in various processes such as pre-mRNA splicing and RNA-mediated gene silencing (RNAi). The CBC complex is involved in miRNA-mediated RNA interference via its interaction with Ars2 and is required for primary microRNAs (miRNAs) processing. Also involved in innate immunity via the short interfering RNAs (siRNAs) processing machinery by restricting the viral RNA production. In the CBC complex, Cbp20 recognizes and binds capped RNAs (m7GpppG-capped RNA) but requires Cbp80 to stabilize the movement of its N-terminal loop and lock the CBC into a high affinity cap-binding state with the cap structure. This is Nuclear cap-binding protein subunit 2 (Cbp20) from Drosophila erecta (Fruit fly).